The primary structure comprises 292 residues: Bifunctional protein FolD 1 (292 aa).

NADP(+) is bound at residue 165–167; the sequence is GRS.

It belongs to the tetrahydrofolate dehydrogenase/cyclohydrolase family. As to quaternary structure, homodimer.

The enzyme catalyses (6R)-5,10-methylene-5,6,7,8-tetrahydrofolate + NADP(+) = (6R)-5,10-methenyltetrahydrofolate + NADPH. It carries out the reaction (6R)-5,10-methenyltetrahydrofolate + H2O = (6R)-10-formyltetrahydrofolate + H(+). It functions in the pathway one-carbon metabolism; tetrahydrofolate interconversion. Catalyzes the oxidation of 5,10-methylenetetrahydrofolate to 5,10-methenyltetrahydrofolate and then the hydrolysis of 5,10-methenyltetrahydrofolate to 10-formyltetrahydrofolate. The protein is Bifunctional protein FolD 1 of Myxococcus xanthus (strain DK1622).